The following is a 270-amino-acid chain: MAITAAEVKKLRDATGAGMMDAKKALTEADGDFDKAVDILRVSGAAKAAKRSDREASNGLVAAAGSSLVHIGSETDFVAKNEEFIAAAHEIAEAADKAGADSKDAANAAALADGTTVGDKLGELAAKIGEKIELANAAHFDGNAHVYLHRRSQDLPPQVGVMVEYEGDNIEAVHGVCLQIAAMSPRWLSRDEVPADVVEHERTVAADIAREEGKPEKIIDRIVEGRLGGFFKENCLLDQPAISDDKKTVAQTLEAAGVTLKRFVRFSAGE.

The segment at 75-78 (TDFV) is involved in Mg(2+) ion dislocation from EF-Tu.

It belongs to the EF-Ts family.

The protein localises to the cytoplasm. Its function is as follows. Associates with the EF-Tu.GDP complex and induces the exchange of GDP to GTP. It remains bound to the aminoacyl-tRNA.EF-Tu.GTP complex up to the GTP hydrolysis stage on the ribosome. This chain is Elongation factor Ts, found in Cutibacterium acnes (strain DSM 16379 / KPA171202) (Propionibacterium acnes).